Here is a 214-residue protein sequence, read N- to C-terminus: A-type ATP synthase subunit D (214 aa).

It belongs to the V-ATPase D subunit family. As to quaternary structure, has multiple subunits with at least A(3), B(3), C, D, E, F, H, I and proteolipid K(x).

It is found in the cell membrane. Its function is as follows. Component of the A-type ATP synthase that produces ATP from ADP in the presence of a proton gradient across the membrane. The protein is A-type ATP synthase subunit D of Desulfurococcus sp. (strain SY).